The following is a 699-amino-acid chain: PTS system glucose-specific EIICBA component (699 aa).

Residues 3-424 (KALFGVLQKI…FNLKTPGRED (422 aa)) form the PTS EIIC type-1 domain. 11 helical membrane-spanning segments follow: residues 16–36 (LMLP…GNAM), 66–86 (IVFD…LANG), 89–109 (VAGI…SAVL), 139–159 (IPTL…AALL), 180–200 (FVPI…LVIW), 233–253 (LIPF…FFSY), 283–303 (FMTG…LAIY), 313–333 (LVAG…ITEP), 338–358 (FLFV…LSFM), 365–385 (VKIG…GILP), and 388–408 (TAWW…YFGF). The PTS EIIB type-1 domain occupies 439-520 (GDLPYEILQA…QDIIAGRKPR (82 aa)). The Phosphocysteine intermediate; for EIIB activity role is filled by cysteine 461. Residues 568-672 (DQVFSGKMMG…SLMTPIVFTN (105 aa)) enclose the PTS EIIA type-1 domain. Histidine 620 acts as the Tele-phosphohistidine intermediate; for EIIA activity in catalysis.

It localises to the cell membrane. It carries out the reaction N(pros)-phospho-L-histidyl-[protein] + D-glucose(out) = D-glucose 6-phosphate(in) + L-histidyl-[protein]. It catalyses the reaction D-glucosamine(out) + N(pros)-phospho-L-histidyl-[protein] = D-glucosamine 6-phosphate(in) + L-histidyl-[protein]. The phosphoenolpyruvate-dependent sugar phosphotransferase system (sugar PTS), a major carbohydrate active transport system, catalyzes the phosphorylation of incoming sugar substrates concomitantly with their translocation across the cell membrane. This system is involved in glucose transport. The system can also transport glucosamine. Functionally, in addition, plays an important role in the phosphorylation of EIIA-deficient PTS transporters. The EIIA domain can transfer a phosphoryl group to EIIA-deficient PTS transporters, enabling growth with maltose, N-acetylglucosamine, sucrose or trehalose as the sole carbon source. The sequence is that of PTS system glucose-specific EIICBA component (ptsG) from Bacillus subtilis (strain 168).